A 363-amino-acid polypeptide reads, in one-letter code: Fructose-bisphosphate aldolase 1 (363 aa).

Residue Asp34 participates in dihydroxyacetone phosphate binding. Residues Ser36 and Thr39 each coordinate D-glyceraldehyde 3-phosphate. Residue Arg43 participates in beta-D-fructose 1,6-bisphosphate binding. Lys107 serves as a coordination point for D-glyceraldehyde 3-phosphate. Lys146 is a dihydroxyacetone phosphate binding site. D-glyceraldehyde 3-phosphate is bound at residue Glu189. Catalysis depends on Glu189, which acts as the Proton acceptor. Dihydroxyacetone phosphate is bound by residues Lys231, Ser273, and Gly274. The active-site Schiff-base intermediate with dihydroxyacetone phosphate is the Lys231. Residues 273 to 275 (SGG) and Ser301 each bind beta-D-fructose 1,6-bisphosphate. Residues Gly303 and Arg304 each coordinate dihydroxyacetone phosphate. Arg304 contributes to the beta-D-fructose 1,6-bisphosphate binding site.

It belongs to the class I fructose-bisphosphate aldolase family. As to quaternary structure, homotetramer. Component of a complex, at least composed of ald-1, microneme protein MIC2 and ACT1. Interacts with microneme protein MIC2 (via cytoplasmic tail). Interacts with ACT1 (F-actin).

The protein resides in the cytoplasm. It carries out the reaction beta-D-fructose 1,6-bisphosphate = D-glyceraldehyde 3-phosphate + dihydroxyacetone phosphate. Its pathway is carbohydrate degradation; glycolysis; D-glyceraldehyde 3-phosphate and glycerone phosphate from D-glucose: step 4/4. Its function is as follows. Plays a key role in glycolysis by catalyzing the cleavage of fructose 1,6-bisphosphate into dihydroxyacetone phosphate and glyceraldehyde 3-phosphate. Forms a bridge between cell surface adhesins and the actin cytoskeleton. Required for parasite invasion of host cells. The chain is Fructose-bisphosphate aldolase 1 from Toxoplasma gondii.